The chain runs to 375 residues: Pectate lyase B (375 aa).

Residues 1–22 form the signal peptide; sequence MKSLITPIAAGLLLAFSQYSLA. A disulfide bond links Cys93 and Cys176. Ca(2+) is bound by residues Asp150, Asp152, Glu187, and Asp191. Arg240 is a catalytic residue. An intrachain disulfide couples Cys351 to Cys374.

This sequence belongs to the polysaccharide lyase 1 family. PLADES subfamily. Ca(2+) serves as cofactor.

Its subcellular location is the secreted. It catalyses the reaction Eliminative cleavage of (1-&gt;4)-alpha-D-galacturonan to give oligosaccharides with 4-deoxy-alpha-D-galact-4-enuronosyl groups at their non-reducing ends.. The protein operates within glycan metabolism; pectin degradation; 2-dehydro-3-deoxy-D-gluconate from pectin: step 2/5. In terms of biological role, involved in maceration and soft-rotting of plant tissue. This Dickeya chrysanthemi (Pectobacterium chrysanthemi) protein is Pectate lyase B (pelB).